Consider the following 135-residue polypeptide: Nucleoside diphosphate kinase (135 aa).

Residues K9, Y57, R85, T91, R102, and N112 each contribute to the ATP site. The active-site Pros-phosphohistidine intermediate is the H115.

Belongs to the NDK family. As to quaternary structure, homotetramer. It depends on Mg(2+) as a cofactor.

The protein resides in the cytoplasm. The catalysed reaction is a 2'-deoxyribonucleoside 5'-diphosphate + ATP = a 2'-deoxyribonucleoside 5'-triphosphate + ADP. The enzyme catalyses a ribonucleoside 5'-diphosphate + ATP = a ribonucleoside 5'-triphosphate + ADP. Its function is as follows. Major role in the synthesis of nucleoside triphosphates other than ATP. The ATP gamma phosphate is transferred to the NDP beta phosphate via a ping-pong mechanism, using a phosphorylated active-site intermediate. The polypeptide is Nucleoside diphosphate kinase (Thermoanaerobacter pseudethanolicus (strain ATCC 33223 / 39E) (Clostridium thermohydrosulfuricum)).